The chain runs to 70 residues: MVKRSILLLIKVYQYFISPLTGPTCRFYPTCSQYAFEAVMIHGSLKGSCLAVRRILKCHPFHPGGYDPVP.

This sequence belongs to the UPF0161 family.

The protein localises to the cell inner membrane. Its function is as follows. Could be involved in insertion of integral membrane proteins into the membrane. In Desulforapulum autotrophicum (strain ATCC 43914 / DSM 3382 / VKM B-1955 / HRM2) (Desulfobacterium autotrophicum), this protein is Putative membrane protein insertion efficiency factor.